The primary structure comprises 258 residues: Aquaporin PIP1-2 (258 aa).

The interval 1-37 (MEGKEEDVRLGANKFTERQPIGTAAQSQDKDYKEPPP) is disordered. Residues 1–55 (MEGKEEDVRLGANKFTERQPIGTAAQSQDKDYKEPPPAPLFEPGELSSWSFYRAG) are Cytoplasmic-facing. Residues 56–76 (IAEFVATFLFLYITILTVMGV) traverse the membrane as a helical segment. Residues 77 to 89 (VKSSTKCSTVGIQ) lie on the Extracellular side of the membrane. The chain crosses the membrane as a helical span at residues 90 to 110 (GIAWAFGGMIFALVYCTAGIS). Residues 111 to 133 (GGHINPAVTFGLFLARKLSLTRA) lie on the Cytoplasmic side of the membrane. The NPA 1 motif lies at 115-117 (NPA). Residues 134-154 (LFYMVMQCLGAICGAGVVKGF) form a helical membrane-spanning segment. Over 155-175 (QKGLYENNGGGANVVAPGYTK) the chain is Extracellular. Residues 176–196 (GDGLGAEIVGTFILVYTVFSA) traverse the membrane as a helical segment. Residues 197–209 (TDAKRSARDSHVP) lie on the Cytoplasmic side of the membrane. Residues 210–230 (ILAPLPIGFAVFLVHLATIPI) traverse the membrane as a helical segment. The Extracellular portion of the chain corresponds to 231–258 (TGTGINPARSLGAAIIYNKGHAWDDHWI). The NPA 2 signature appears at 236 to 238 (NPA).

It belongs to the MIP/aquaporin (TC 1.A.8) family. PIP (TC 1.A.8.11) subfamily. In terms of tissue distribution, barely detectable in roots, leaves and fruits.

It is found in the cell membrane. Functionally, water channel required to facilitate the transport of water across cell membrane; mercury-insensitive. Contributes to the tolerance to multiple abiotic stresses including salt (NaCl), cold and water deprivation, by modulating cytosolic K(+)/Na(+) ratio, maintaining osmotic balance, and reducing membrane injury (e.g. oxidative injury). This is Aquaporin PIP1-2 from Musa acuminata (Banana).